The chain runs to 405 residues: ATP phosphoribosyltransferase regulatory subunit (405 aa).

Belongs to the class-II aminoacyl-tRNA synthetase family. HisZ subfamily. Heteromultimer composed of HisG and HisZ subunits.

The protein localises to the cytoplasm. The protein operates within amino-acid biosynthesis; L-histidine biosynthesis; L-histidine from 5-phospho-alpha-D-ribose 1-diphosphate: step 1/9. Functionally, required for the first step of histidine biosynthesis. May allow the feedback regulation of ATP phosphoribosyltransferase activity by histidine. The protein is ATP phosphoribosyltransferase regulatory subunit of Microcystis aeruginosa (strain NIES-843 / IAM M-2473).